The primary structure comprises 684 residues: Glycine--tRNA ligase beta subunit (684 aa).

Belongs to the class-II aminoacyl-tRNA synthetase family. As to quaternary structure, tetramer of two alpha and two beta subunits.

The protein localises to the cytoplasm. The enzyme catalyses tRNA(Gly) + glycine + ATP = glycyl-tRNA(Gly) + AMP + diphosphate. This Stutzerimonas stutzeri (strain A1501) (Pseudomonas stutzeri) protein is Glycine--tRNA ligase beta subunit.